The sequence spans 204 residues: Elongation factor Ts (204 aa).

Residues 87-90 (TDFV) are involved in Mg(2+) ion dislocation from EF-Tu.

This sequence belongs to the EF-Ts family.

It is found in the cytoplasm. In terms of biological role, associates with the EF-Tu.GDP complex and induces the exchange of GDP to GTP. It remains bound to the aminoacyl-tRNA.EF-Tu.GTP complex up to the GTP hydrolysis stage on the ribosome. This is Elongation factor Ts from Frankia alni (strain DSM 45986 / CECT 9034 / ACN14a).